We begin with the raw amino-acid sequence, 179 residues long: Adenine phosphoribosyltransferase (179 aa).

The protein belongs to the purine/pyrimidine phosphoribosyltransferase family. As to quaternary structure, homodimer.

It localises to the cytoplasm. It carries out the reaction AMP + diphosphate = 5-phospho-alpha-D-ribose 1-diphosphate + adenine. Its pathway is purine metabolism; AMP biosynthesis via salvage pathway; AMP from adenine: step 1/1. In terms of biological role, catalyzes a salvage reaction resulting in the formation of AMP, that is energically less costly than de novo synthesis. In Bradyrhizobium sp. (strain BTAi1 / ATCC BAA-1182), this protein is Adenine phosphoribosyltransferase.